A 1093-amino-acid chain; its full sequence is NACHT, LRR and PYD domains-containing protein 14 (1093 aa).

Residues 1 to 97 (MADSSSSSFF…CERAKEEINW (97 aa)) form the Pyrin domain. The tract at residues 102–121 (IGPDDAKAGETQEDQEAVLG) is disordered. The NACHT domain maps to 177 to 499 (QIVVLQGAAG…MFYMLKGSWE (323 aa)). 183-190 (GAAGVGKT) provides a ligand contact to ATP. LRR repeat units follow at residues 730 to 750 (NLMH…KSLC), 759 to 780 (KLQT…NISN), 787 to 807 (SLIF…QLLC), 816 to 836 (YLER…EYLS), 844 to 864 (RLTH…KLMS), 873 to 894 (TLKS…YLST), 901 to 921 (SLTH…KLLC), 930 to 951 (NLQD…DLAS), 958 to 978 (NLRS…KILC), 987 to 1008 (NIQR…DLSS), and 1015 to 1035 (RLIK…VKLY).

Belongs to the NLRP family. As to expression, testis-specific.

Its subcellular location is the cytoplasm. Its function is as follows. May be involved in inflammation and spermatogenesis. In Homo sapiens (Human), this protein is NACHT, LRR and PYD domains-containing protein 14 (NLRP14).